The sequence spans 353 residues: MTVILERRESESLWGRFCNWITSTENRLYIGWFGVLMIPTLLTATSVFIIAFIAAPPVDIDGIREPVSGSLLYGNNIISGAIIPTSAAIGLHFYPIWEAASVDEWLYNGGPYELIVLHFLLGVACYMGREWELSFRLGMRPWIAVAYSAPVAAAAAVFLIYPIGQGSFSDGMPLGISGTFNFMIVFQAEHNILMHPFHMLGVAGVFGGSLFSAMHGSLVTSSLIRETTENESANAGYRFGQEEETYNIVAAHGYFGRLIFQYASFNNSRSLHFFLAAWPVVGIWFTALGISTMAFNLNGFNFNQSVVDSQGRVINTWADIINRANLGMEVMHERNAHNFPLDLAAVEAPSING.

T2 is modified (N-acetylthreonine). At T2 the chain carries Phosphothreonine. Transmembrane regions (helical) follow at residues 29–46 (YIGWFGVLMIPTLLTATS), 118–133 (HFLLGVACYMGREWEL), and 142–156 (WIAVAYSAPVAAAAA). H118 provides a ligand contact to chlorophyll a. Y126 serves as a coordination point for pheophytin a. D170 and E189 together coordinate [CaMn4O5] cluster. The chain crosses the membrane as a helical span at residues 197–218 (FHMLGVAGVFGGSLFSAMHGSL). A chlorophyll a-binding site is contributed by H198. A quinone contacts are provided by residues H215 and 264-265 (SF). H215 serves as a coordination point for Fe cation. H272 contributes to the Fe cation binding site. A helical transmembrane segment spans residues 274-288 (FLAAWPVVGIWFTAL). Residues H332, E333, D342, and A344 each coordinate [CaMn4O5] cluster. Positions 345–353 (AVEAPSING) are excised as a propeptide.

The protein belongs to the reaction center PufL/M/PsbA/D family. As to quaternary structure, PSII is composed of 1 copy each of membrane proteins PsbA, PsbB, PsbC, PsbD, PsbE, PsbF, PsbH, PsbI, PsbJ, PsbK, PsbL, PsbM, PsbT, PsbX, PsbY, PsbZ, Psb30/Ycf12, at least 3 peripheral proteins of the oxygen-evolving complex and a large number of cofactors. It forms dimeric complexes. It depends on The D1/D2 heterodimer binds P680, chlorophylls that are the primary electron donor of PSII, and subsequent electron acceptors. It shares a non-heme iron and each subunit binds pheophytin, quinone, additional chlorophylls, carotenoids and lipids. D1 provides most of the ligands for the Mn4-Ca-O5 cluster of the oxygen-evolving complex (OEC). There is also a Cl(-1) ion associated with D1 and D2, which is required for oxygen evolution. The PSII complex binds additional chlorophylls, carotenoids and specific lipids. as a cofactor. Post-translationally, tyr-161 forms a radical intermediate that is referred to as redox-active TyrZ, YZ or Y-Z. In terms of processing, C-terminally processed by CTPA; processing is essential to allow assembly of the oxygen-evolving complex and thus photosynthetic growth.

The protein localises to the plastid. It is found in the chloroplast thylakoid membrane. The catalysed reaction is 2 a plastoquinone + 4 hnu + 2 H2O = 2 a plastoquinol + O2. In terms of biological role, photosystem II (PSII) is a light-driven water:plastoquinone oxidoreductase that uses light energy to abstract electrons from H(2)O, generating O(2) and a proton gradient subsequently used for ATP formation. It consists of a core antenna complex that captures photons, and an electron transfer chain that converts photonic excitation into a charge separation. The D1/D2 (PsbA/PsbD) reaction center heterodimer binds P680, the primary electron donor of PSII as well as several subsequent electron acceptors. The chain is Photosystem II protein D1 from Vitis vinifera (Grape).